We begin with the raw amino-acid sequence, 150 residues long: Globin (150 aa).

The 140-residue stretch at 11–150 (PLSAAEKTKI…MICILLRSAY (140 aa)) folds into the Globin domain. Heme b-binding residues include H74 and H106.

Belongs to the globin family. In terms of assembly, monomer.

This is Globin from Lampetra fluviatilis (European river lamprey).